Reading from the N-terminus, the 435-residue chain is GPI-anchor transamidase component PIGU (435 aa).

Topologically, residues A2–A3 are cytoplasmic. The helical transmembrane segment at P4–S22 threads the bilayer. Residues S23–D78 are Lumenal-facing. Residues Y79–I99 traverse the membrane as a helical segment. Residues Q100–I136 are Cytoplasmic-facing. 4 helical membrane passes run P137–S158, T159–S178, A179–L194, and Y195–L205. Residues Y206–F222 are Cytoplasmic-facing. The a cardiolipin site is built by K216 and M217. A helical membrane pass occupies residues W223–S244. At F245–S286 the chain is on the lumenal side. A helical transmembrane segment spans residues L287 to I306. At K307 to H311 the chain is on the cytoplasmic side. K309 is an a cardiolipin binding site. 2 consecutive transmembrane segments (helical) span residues P312–T331 and V332–W345. The Cytoplasmic segment spans residues N346–N354. The chain crosses the membrane as a helical span at residues I355 to L372. The Lumenal portion of the chain corresponds to W373 to S384. Residues N383 and N385 each coordinate a 2-acyl-6-[6-phosphoethanolamine-alpha-D-mannosyl-(1-&gt;2)-6-phosphoethanolamine-alpha-D-mannosyl-(1-&gt;6)-2-phosphoethanolamine-alpha-D-mannosyl-(1-&gt;4)-alpha-D-glucosaminyl]-1-(1-radyl,2-acyl-sn-glycero-3-phospho)-1D-myo-inositol. Residues N385 to F406 traverse the membrane as a helical segment. Topologically, residues Y407–K435 are cytoplasmic.

The protein belongs to the PIGU family. As to quaternary structure, heteropentamer. Part of the GPI-anchor transamidase complex, consisting of PIGK, PIGT, PIGS, PIGU and GAA1.

Its subcellular location is the endoplasmic reticulum membrane. It participates in glycolipid biosynthesis; glycosylphosphatidylinositol-anchor biosynthesis. In terms of biological role, component of the glycosylphosphatidylinositol-anchor (GPI-anchor) transamidase (GPI-T) complex that catalyzes the formation of the linkage between a proprotein and a GPI-anchor and participates in GPI anchored protein biosynthesis. Binds the lipid portion of GPI-anchor. May act as an organizer in the transmembrane layer to recruit other subunits, and thus is essential for assembly of the complex. This chain is GPI-anchor transamidase component PIGU, found in Homo sapiens (Human).